The primary structure comprises 339 residues: Large ribosomal subunit protein uL10 (339 aa).

Residues 300–339 (AAAQATPSVEEREEEEKPEEEEEEEEKEEEAIEGLGALFG) form a disordered region. The span at 310–331 (EREEEEKPEEEEEEEEKEEEAI) shows a compositional bias: acidic residues.

Belongs to the universal ribosomal protein uL10 family. In terms of assembly, part of the 50S ribosomal subunit. Forms part of the ribosomal stalk which helps the ribosome interact with GTP-bound translation factors. Forms a heptameric L10(L12)2(L12)2(L12)2 complex, where L10 forms an elongated spine to which the L12 dimers bind in a sequential fashion.

Its function is as follows. Forms part of the ribosomal stalk, playing a central role in the interaction of the ribosome with GTP-bound translation factors. The polypeptide is Large ribosomal subunit protein uL10 (Archaeoglobus fulgidus (strain ATCC 49558 / DSM 4304 / JCM 9628 / NBRC 100126 / VC-16)).